Consider the following 299-residue polypeptide: Prohibitin-2 (299 aa).

Position 2 is an N-acetylalanine (Ala2). The interval 19-49 (MGTALKLLLGAGAVAYGVRESVFTVEGGHRA) is necessary for transcriptional repression. Tyr128 carries the phosphotyrosine modification. Lys147 is modified (N6-acetyllysine). The interval 150 to 174 (ASQLITQRAQVSLLIRRELTERAKD) is necessary for transcriptional repression. Residue Ser151 is modified to Phosphoserine. The stretch at 190–238 (SREYTAAVEAKQVAQQEAQRAQFLVEKAKQEQRQKIVQAEGEAEAAKML) forms a coiled coil. 4 positions are modified to N6-acetyllysine: Lys200, Lys236, Lys250, and Lys262.

It belongs to the prohibitin family. As to quaternary structure, the mitochondrial prohibitin complex consists of two subunits (PHB1 and PHB2), assembled into a membrane-associated ring-shaped supercomplex of approximately 1 mDa. Interacts with ESR1, HDAC1 and HDAC5. Interacts with ZNF703. Interacts with STOML2. Interacts with ARFGEF3. Interacts with SPHK2. Interacts with COX4I1; the interaction associates PHB2 with COX. Interacts with MAP1LC3B (membrane-bound form LC3-II); the interaction is direct and upon mitochondrial depolarization and proteasome-dependent outer membrane rupture. Interacts with IGFBP6 (via C-terminal domain). Interacts with CLPB. Interacts with CD86 (via cytoplasmic domain); the interactions increases after priming with CD40. Interacts with AFG3L2. Interacts with DNAJC19. Interacts with AKT2; this interaction may be important for myogenic differentiation. Phosphorylated. Tyrosine phosphorylation is indirectly stimulated by IGFBP6.

Its subcellular location is the mitochondrion inner membrane. It localises to the cytoplasm. It is found in the nucleus. The protein resides in the cell membrane. Functionally, protein with pleiotropic attributes mediated in a cell-compartment- and tissue-specific manner, which include the plasma membrane-associated cell signaling functions, mitochondrial chaperone, and transcriptional co-regulator of transcription factors and sex steroid hormones in the nucleus. Its function is as follows. In the mitochondria, together with PHB, forms large ring complexes (prohibitin complexes) in the inner mitochondrial membrane (IMM) and functions as a chaperone protein that stabilizes mitochondrial respiratory enzymes and maintains mitochondrial integrity in the IMM, which is required for mitochondrial morphogenesis, neuronal survival, and normal lifespan. The prohibitin complex, with DNAJC19, regulates cardiolipin remodeling and the protein turnover of OMA1 in a cardiolipin-binding manner. Also regulates cytochrome-c oxidase assembly (COX) and mitochondrial respiration. Binding to sphingoid 1-phosphate (SPP) modulates its regulator activity. Has a key role of mitophagy receptor involved in targeting mitochondria for autophagic degradation. Involved in mitochondrial-mediated antiviral innate immunity, activates RIG-I-mediated signal transduction and production of IFNB1 and pro-inflammatory cytokine IL6. In terms of biological role, in the nucleus, serves as transcriptional co-regulator. Acts as a mediator of transcriptional repression by nuclear hormone receptors via recruitment of histone deacetylases. Functions as an estrogen receptor (ER)-selective coregulator that potentiates the inhibitory activities of antiestrogens and represses the activity of estrogens. Competes with NCOA1 for modulation of ER transcriptional activity. In the plasma membrane, is involved in IGFBP6-induced cell migration. Cooperates with CD86 to mediate CD86-signaling in B lymphocytes that regulates the level of IgG1 produced through the activation of distal signaling intermediates. Upon CD40 engagement, required to activate NF-kappa-B signaling pathway via phospholipase C and protein kinase C activation. This Rattus norvegicus (Rat) protein is Prohibitin-2.